We begin with the raw amino-acid sequence, 290 residues long: ATP synthase gamma chain (290 aa).

Belongs to the ATPase gamma chain family. As to quaternary structure, F-type ATPases have 2 components, CF(1) - the catalytic core - and CF(0) - the membrane proton channel. CF(1) has five subunits: alpha(3), beta(3), gamma(1), delta(1), epsilon(1). CF(0) has three main subunits: a, b and c.

It localises to the cell membrane. Functionally, produces ATP from ADP in the presence of a proton gradient across the membrane. The gamma chain is believed to be important in regulating ATPase activity and the flow of protons through the CF(0) complex. In Listeria innocua serovar 6a (strain ATCC BAA-680 / CLIP 11262), this protein is ATP synthase gamma chain.